Reading from the N-terminus, the 359-residue chain is Protein Wnt-5a (359 aa).

The signal sequence occupies residues 1–20 (MASRYLTLAAALLASFLQVD). A disulfide bridge links C83 with C94. Residues N93 and N99 are each glycosylated (N-linked (GlcNAc...) asparagine). Disulfide bonds link C133–C141, C143–C161, C217–C231, C219–C226, C288–C319, C304–C314, C318–C358, C334–C349, C336–C346, and C341–C342. Residue S223 is the site of O-palmitoleoyl serine; by PORCN attachment. N291 and N305 each carry an N-linked (GlcNAc...) asparagine glycan.

This sequence belongs to the Wnt family. Palmitoleoylation is required for efficient binding to frizzled receptors. Depalmitoleoylation leads to Wnt signaling pathway inhibition.

The protein localises to the secreted. It localises to the extracellular space. The protein resides in the extracellular matrix. Functionally, ligand for members of the frizzled family of seven transmembrane receptors. Can activate or inhibit canonical Wnt signaling, depending on receptor context. Required during embryogenesis for extension of the primary anterior-posterior axis. The protein is Protein Wnt-5a (WNT5A) of Pleurodeles waltl (Iberian ribbed newt).